A 575-amino-acid polypeptide reads, in one-letter code: Isocitrate dehydrogenase kinase/phosphatase (575 aa).

ATP is bound by residues 315 to 321 (APGVKGM) and Lys-336. Asp-371 is an active-site residue.

This sequence belongs to the AceK family.

It localises to the cytoplasm. It catalyses the reaction L-seryl-[isocitrate dehydrogenase] + ATP = O-phospho-L-seryl-[isocitrate dehydrogenase] + ADP + H(+). In terms of biological role, bifunctional enzyme which can phosphorylate or dephosphorylate isocitrate dehydrogenase (IDH) on a specific serine residue. This is a regulatory mechanism which enables bacteria to bypass the Krebs cycle via the glyoxylate shunt in response to the source of carbon. When bacteria are grown on glucose, IDH is fully active and unphosphorylated, but when grown on acetate or ethanol, the activity of IDH declines drastically concomitant with its phosphorylation. In Yersinia enterocolitica serotype O:8 / biotype 1B (strain NCTC 13174 / 8081), this protein is Isocitrate dehydrogenase kinase/phosphatase.